A 185-amino-acid polypeptide reads, in one-letter code: MNKQKGLSVKSVVAIGIGAAIYVILARFTSIPTGIPNTNIEIVYPFLALLATIYGPVVGFSVGFIGHALGDFLMYGQTWWSWVLATAVLGLIIGLYGMRLDLDNGVFTVKQMVGFNVVQIIANVISWLLIAPVGDILIYSEPQNKVFLQGATATITNSLSILILGTILLKAYAATKVKKGSLRKD.

5 consecutive transmembrane segments (helical) span residues 6-26, 46-66, 78-98, 118-138, and 147-167; these read GLSV…VILA, FLAL…GFIG, TWWS…LYGM, VQII…DILI, and FLQG…LGTI.

Belongs to the UPF0397 family.

It localises to the cell membrane. The sequence is that of UPF0397 protein LGAS_1499 from Lactobacillus gasseri (strain ATCC 33323 / DSM 20243 / BCRC 14619 / CIP 102991 / JCM 1131 / KCTC 3163 / NCIMB 11718 / NCTC 13722 / AM63).